Here is a 116-residue protein sequence, read N- to C-terminus: Ribosome-binding factor A (116 aa).

It belongs to the RbfA family. As to quaternary structure, monomer. Binds 30S ribosomal subunits, but not 50S ribosomal subunits or 70S ribosomes.

It localises to the cytoplasm. One of several proteins that assist in the late maturation steps of the functional core of the 30S ribosomal subunit. Associates with free 30S ribosomal subunits (but not with 30S subunits that are part of 70S ribosomes or polysomes). Required for efficient processing of 16S rRNA. May interact with the 5'-terminal helix region of 16S rRNA. This chain is Ribosome-binding factor A, found in Clostridium botulinum (strain Alaska E43 / Type E3).